The following is a 213-amino-acid chain: Protein ORF D (213 aa).

This Elephas maximus (Indian elephant) protein is Protein ORF D.